Consider the following 151-residue polypeptide: Deazaflavin-dependent nitroreductase (151 aa).

Coenzyme F420-(gamma-Glu)n-binding positions include arginine 54 to threonine 56, arginine 60 to tyrosine 65, alanine 76 to lysine 79, methionine 87 to asparagine 91, and tyrosine 133.

This sequence belongs to the F420H(2)-dependent quinone reductase family.

It localises to the cell membrane. It carries out the reaction oxidized coenzyme F420-(gamma-L-Glu)(n) + a quinol + H(+) = reduced coenzyme F420-(gamma-L-Glu)(n) + a quinone. Involved in a F420-dependent anti-oxidant mechanism that protects M.tuberculosis against oxidative stress and bactericidal agents. Catalyzes the F420H(2)-dependent two-electron reduction of quinones to dihydroquinones, thereby preventing the formation of cytotoxic semiquinones obtained by the one-electron reduction pathway. In vitro, catalyzes the reduction of both benzoquinone and naphthoquinone analogs; since menaquinone is the sole quinone electron carrier in the respiratory chain in M.tuberculosis, the physiological electron acceptor for Fqr-mediated F420H(2) oxidation is therefore likely to be the endogenous menaquinone found in the membrane fraction of M.tuberculosis. Is able to use F420 species with two and five glutamate residues in its polyglutamate tail. Cannot use NADH or NADPH instead of F420H(2) as the electron donor. Its function is as follows. Is involved in the bioreductive activation of bicyclic 4-nitroimidazole prodrugs such as PA-824 and delamanid developed for anti-tuberculosis therapy against both replicating and persistent bacteria. It converts PA-824 into three primary metabolites resulting from reduction of the imidazole ring at C-3; the major one is the corresponding des-nitroimidazole that generates lethal reactive nitrogen species, including nitric oxide (NO), which appears to be responsible for the anaerobic killing activity. Ddn uses the reduced F420 produced by FGD1 to activate PA-824. Delamanid (OPC-67683) is also reduced by Ddn to its des-nitro form. This Mycobacterium tuberculosis (strain CDC 1551 / Oshkosh) protein is Deazaflavin-dependent nitroreductase (ddn).